A 268-amino-acid polypeptide reads, in one-letter code: Centromere protein Q (268 aa).

Residues 1 to 31 form a disordered region; that stretch reads MSGKANASKKNFEQLKRNPKRKKDNEEVVLS. The residue at position 31 (Ser-31) is a Phosphoserine. Positions 170–203 form a coiled coil; that stretch reads ELMTGNIQSLKNKIQILASEVEEEEERVKQIHQI. A Phosphoserine modification is found at Ser-249.

Belongs to the CENP-Q/OKP1 family. Component of the CENPA-CAD complex, composed of CENPI, CENPK, CENPL, CENPO, CENPP, CENPQ, CENPR and CENPS. The CENPA-CAD complex interacts with the CENPA-NAC complex, at least composed of CENPA, CENPC, CENPH, CENPM, CENPN, CENPT and CENPU.

It is found in the nucleus. The protein resides in the chromosome. Its subcellular location is the centromere. Functionally, component of the CENPA-CAD (nucleosome distal) complex, a complex recruited to centromeres which is involved in assembly of kinetochore proteins, mitotic progression and chromosome segregation. May be involved in incorporation of newly synthesized CENPA into centromeres via its interaction with the CENPA-NAC complex. Plays an important role in chromosome congression and in the recruitment of CENP-O complex (which comprises CENPO, CENPP, CENPQ and CENPU), CENPE and PLK1 to the kinetochores. This chain is Centromere protein Q (CENPQ), found in Macaca fascicularis (Crab-eating macaque).